The following is a 439-amino-acid chain: uncharacterized protein (439 aa).

Positions 65–208 (TRPKRVFVLV…VYAFELTTEG (144 aa)) constitute a DAGKc domain.

This is an uncharacterized protein from Caenorhabditis elegans.